A 1019-amino-acid chain; its full sequence is Probable LRR receptor-like serine/threonine-protein kinase At1g29720 (1019 aa).

The first 19 residues, 1–19 (MSIILWSFFLFFTIILSSL), serve as a signal peptide directing secretion. The Extracellular segment spans residues 20-615 (TNITTLASFS…EKTKHHIKYP (596 aa)). 3 N-linked (GlcNAc...) asparagine glycosylation sites follow: Asn21, Asn79, and Asn90. LRR repeat units follow at residues 93–117 (ICRI…LTKL), 118–141 (PYLK…WAKM), 143–165 (YLTS…LQNF), 166–189 (KNLT…LGNL), 190–212 (TSLT…TLAR), 214–236 (VNLE…YIGN), 237–261 (WTRL…VVRL), 263–283 (NLLE…NLSS), 284–307 (KGLK…IWNL), 308–330 (TDLK…VQNP), 332–351 (KNIY…GGLL), 352–374 (NSQS…QKGS), and 375–398 (TINT…AVPA). N-linked (GlcNAc...) asparagine glycosylation is found at Asn153, Asn167, and Asn188. N-linked (GlcNAc...) asparagine glycosylation is found at Asn225 and Asn236. Residues Asn280 and Asn306 are each glycosylated (N-linked (GlcNAc...) asparagine). 4 N-linked (GlcNAc...) asparagine glycosylation sites follow: Asn363, Asn387, Asn469, and Asn558. The helical transmembrane segment at 616-636 (LILGASGALVTIVLLAVGIYA) threads the bilayer. Residues 637-1019 (RGIYRRDNNR…STVENSSSSL (383 aa)) are Cytoplasmic-facing. Positions 673 to 946 (FDQANKLGEG…EAVKMLEGEI (274 aa)) constitute a Protein kinase domain. ATP is bound by residues 679-687 (LGEGGFGSV) and Lys701. A Phosphotyrosine modification is found at Tyr746. The active-site Proton acceptor is Asp797. Phosphoserine is present on Ser830. Residues Thr831 and Thr836 each carry the phosphothreonine modification. Position 844 is a phosphotyrosine (Tyr844).

Belongs to the protein kinase superfamily. Ser/Thr protein kinase family.

Its subcellular location is the cell membrane. The enzyme catalyses L-seryl-[protein] + ATP = O-phospho-L-seryl-[protein] + ADP + H(+). The catalysed reaction is L-threonyl-[protein] + ATP = O-phospho-L-threonyl-[protein] + ADP + H(+). This chain is Probable LRR receptor-like serine/threonine-protein kinase At1g29720 (RFK1), found in Arabidopsis thaliana (Mouse-ear cress).